Consider the following 167-residue polypeptide: Signal peptidase complex catalytic subunit SEC11 (167 aa).

Over 1-9 the chain is Cytoplasmic; it reads MNLRFELQK. A helical; Signal-anchor for type II membrane protein transmembrane segment spans residues 10 to 30; it reads LLNVCFLFASAYMFWQGLAIA. Topologically, residues 31–167 are lumenal; sequence TNSASPIVVV…LGLSALLGGE (137 aa). Active-site charge relay system residues include Ser44, His83, and Asp109. N-linked (GlcNAc...) asparagine glycosylation occurs at Asn121. Residues 153-164 form a C-terminal short (CTS) helix region; the sequence is ALLGMLGLSALL.

This sequence belongs to the peptidase S26B family. In terms of assembly, component of the signal peptidase complex (SPC) composed of a catalytic subunit SEC11 and three accessory subunits SPC1, SPC2 and SPC3. The complex induces a local thinning of the ER membrane which is used to measure the length of the signal peptide (SP) h-region of protein substrates. This ensures the selectivity of the complex towards h-regions shorter than 18-20 amino acids. SPC associates with the translocon complex.

Its subcellular location is the endoplasmic reticulum membrane. It catalyses the reaction Cleavage of hydrophobic, N-terminal signal or leader sequences from secreted and periplasmic proteins.. Functionally, catalytic component of the signal peptidase complex (SPC) which catalyzes the cleavage of N-terminal signal sequences from nascent proteins as they are translocated into the lumen of the endoplasmic reticulum. Specifically cleaves N-terminal signal peptides that contain a hydrophobic alpha-helix (h-region) shorter than 18-20 amino acids. The polypeptide is Signal peptidase complex catalytic subunit SEC11 (SEC11) (Saccharomyces cerevisiae (strain Lalvin QA23) (Baker's yeast)).